The chain runs to 402 residues: Tol-Pal system protein TolB (402 aa).

Positions 1 to 17 are cleaved as a signal peptide; that stretch reads MKKIVAIFLVFLGSLWA.

It belongs to the TolB family. As to quaternary structure, the Tol-Pal system is composed of five core proteins: the inner membrane proteins TolA, TolQ and TolR, the periplasmic protein TolB and the outer membrane protein Pal. They form a network linking the inner and outer membranes and the peptidoglycan layer.

It localises to the periplasm. Part of the Tol-Pal system, which plays a role in outer membrane invagination during cell division and is important for maintaining outer membrane integrity. This Campylobacter jejuni (strain RM1221) protein is Tol-Pal system protein TolB.